The sequence spans 234 residues: S-adenosylmethionine synthase 1 (234 aa).

Residues 10–12, 78–81, aspartate 89, 95–96, alanine 112, lysine 116, and lysine 120 contribute to the ATP site; these read DGK, SGRF, and RK. Aspartate 89 serves as a coordination point for L-methionine. Lysine 120 lines the L-methionine pocket.

Belongs to the AdoMet synthase family. As to quaternary structure, homotetramer. Mn(2+) serves as cofactor. The cofactor is Mg(2+). Requires Co(2+) as cofactor. K(+) is required as a cofactor. Mainly in floral buds and roots.

It localises to the cytoplasm. The enzyme catalyses L-methionine + ATP + H2O = S-adenosyl-L-methionine + phosphate + diphosphate. It functions in the pathway amino-acid biosynthesis; S-adenosyl-L-methionine biosynthesis; S-adenosyl-L-methionine from L-methionine: step 1/1. Catalyzes the formation of S-adenosylmethionine from methionine and ATP. The reaction comprises two steps that are both catalyzed by the same enzyme: formation of S-adenosylmethionine (AdoMet) and triphosphate, and subsequent hydrolysis of the triphosphate. The polypeptide is S-adenosylmethionine synthase 1 (SMS-1) (Petroselinum crispum (Parsley)).